We begin with the raw amino-acid sequence, 290 residues long: Nitrogenase iron protein 2 (290 aa).

ATP is bound at residue 10-17 (GKGGIGKS). Position 98 (Cys-98) interacts with [4Fe-4S] cluster. Position 101 is an ADP-ribosylarginine; by dinitrogenase reductase ADP-ribosyltransferase (Arg-101). Position 133 (Cys-133) interacts with [4Fe-4S] cluster.

This sequence belongs to the NifH/BchL/ChlL family. In terms of assembly, homodimer. The cofactor is [4Fe-4S] cluster. In terms of processing, the reversible ADP-ribosylation of Arg-101 inactivates the nitrogenase reductase and regulates nitrogenase activity.

It catalyses the reaction N2 + 8 reduced [2Fe-2S]-[ferredoxin] + 16 ATP + 16 H2O = H2 + 8 oxidized [2Fe-2S]-[ferredoxin] + 2 NH4(+) + 16 ADP + 16 phosphate + 6 H(+). In terms of biological role, the key enzymatic reactions in nitrogen fixation are catalyzed by the nitrogenase complex, which has 2 components: the iron protein (component 2) and a component 1 which is either a molybdenum-iron protein, a vanadium-iron, or an iron-iron protein. The chain is Nitrogenase iron protein 2 (vnfH) from Azotobacter chroococcum mcd 1.